Reading from the N-terminus, the 897-residue chain is 4-hydroxyphenylacetate decarboxylase glycyl radical subunit (897 aa).

The 736-residue stretch at Glu-35–Leu-770 folds into the PFL domain. Ser-344 and Cys-503 together coordinate 4-hydroxyphenylacetate. Residue Cys-503 is the Cysteine radical intermediate of the active site. The active-site Proton donor is Glu-505. 4-hydroxyphenylacetate-binding residues include His-536 and Glu-637. Residues Gly-778–Lys-897 enclose the Glycine radical domain. Gly-873 is modified (glycine radical).

It belongs to the glycyl radical enzyme (GRE) family. HPAD subfamily. In terms of assembly, heterooctamer consisting of 4 large (HpdB) subunits and 4 small (HpdC) subunits, arranged as a tetramer of heterodimers. Also forms a catalytically inactive homodimer. In terms of processing, requires the activating protein CsdA to generate the key active site glycyl radical that is involved in catalysis. Phosphorylated on serine. Phosphorylation may trigger the formation of the active heterooctamers and thereby regulates enzyme activity.

It catalyses the reaction 4-hydroxyphenylacetate + H(+) = 4-methylphenol + CO2. The enzyme catalyses 3,4-dihydroxyphenylacetate + H(+) = 4-methylcatechol + CO2. In terms of biological role, glycyl radical subunit of the HPA decarboxylase that decarboxylates phenylacetates with a hydroxyl group in the p-position. Active toward 4-hydroxyphenylacetate and 3,4-dihydroxyphenylacetate, forming 4-methylphenol and 4-methylcatechol, respectively. Is likely involved in the catabolism of aromatic amino acids such as tyrosine fermentation. 4-methylphenol (p-cresol) formation provides metabolic toxicity, which allows an active suppression of other microbes and may provide growth advantages for the producers in highly competitive environments. The large subunit is the catalytic subunit that binds the substrate. This chain is 4-hydroxyphenylacetate decarboxylase glycyl radical subunit, found in Clostridium scatologenes.